The chain runs to 457 residues: MLHLYNTLSRQKERFQPIQPGKVNMYVCGMTVYDYCHLGHARVMVVFDMVARWLRASGYDLTYVRNITDIDDKIIRRAAENGEPINVLTQRFIDAMDEDAAALGVQKPNFEPRATQFVPDMISMIEELIGKGRAYAAPNGDVYYAVREFAGYGQLSGKSLDDLRAGERVDVDPNKRDPMDFVLWKAAKPGEPAWPSPWGQGRPGWHIECSAMNEHYFGPHFDIHGGGADLQFPHHENEIAQSEGAHDCKFVNYWMHNGFIRVDNEKMSKSLGNFFTIREVLEKYDAEVVRFFILRAHYRSPLNYSDAHLEDARSALSRLYTALKNVPAADVALDWEANDYARRFRAAMDDDFNTVEAVAVLFELAGEANKSRSAELAGWLKTLGGVLGLLQRDPVDFLQGGSLEGEISADEVEQLIAARKAARAGKDWAESDRIRDELIARGIVLEDGAGGTTWRRA.

A Zn(2+)-binding site is contributed by Cys28. The short motif at 30–40 (MTVYDYCHLGH) is the 'HIGH' region element. Zn(2+) is bound by residues Cys209, His234, and Glu238. Positions 266-270 (KMSKS) match the 'KMSKS' region motif. Lys269 contributes to the ATP binding site.

The protein belongs to the class-I aminoacyl-tRNA synthetase family. As to quaternary structure, monomer. Requires Zn(2+) as cofactor.

Its subcellular location is the cytoplasm. It catalyses the reaction tRNA(Cys) + L-cysteine + ATP = L-cysteinyl-tRNA(Cys) + AMP + diphosphate. The polypeptide is Cysteine--tRNA ligase (Laribacter hongkongensis (strain HLHK9)).